Consider the following 136-residue polypeptide: Large-conductance mechanosensitive channel (136 aa).

A run of 2 helical transmembrane segments spans residues 9-29 and 79-99; these read AFAS…GAAF and IQTI…LKAI.

It belongs to the MscL family. In terms of assembly, homopentamer.

It is found in the cell inner membrane. In terms of biological role, channel that opens in response to stretch forces in the membrane lipid bilayer. May participate in the regulation of osmotic pressure changes within the cell. The sequence is that of Large-conductance mechanosensitive channel from Shewanella sp. (strain ANA-3).